The following is a 147-amino-acid chain: Mitochondrial import receptor subunit TOM20 homolog (147 aa).

At 1-3 (MVV) the chain is on the mitochondrial intermembrane side. Residues 4–26 (VGKTSAIAAGVCGALFLGYCIYF) traverse the membrane as a helical segment. The Cytoplasmic portion of the chain corresponds to 27 to 147 (DRKRRSDPNF…AQNLAEDDVE (121 aa)).

It belongs to the Tom20 family. Forms part of the preprotein translocase complex of the outer mitochondrial membrane (TOM complex). Interacts with tom22.

It is found in the mitochondrion outer membrane. In terms of biological role, central component of the receptor complex responsible for the recognition and translocation of cytosolically synthesized mitochondrial preproteins. Together with tom22 functions as the transit peptide receptor at the surface of the mitochondrion outer membrane and facilitates the movement of preproteins into the tom40 translocation pore. In Xenopus tropicalis (Western clawed frog), this protein is Mitochondrial import receptor subunit TOM20 homolog (tomm20).